We begin with the raw amino-acid sequence, 239 residues long: 7-cyano-7-deazaguanine synthase (239 aa).

An ATP-binding site is contributed by 8-18 (LSGGLDSPTVL). Residues Cys-188, Cys-196, Cys-199, and Cys-202 each contribute to the Zn(2+) site.

It belongs to the QueC family. It depends on Zn(2+) as a cofactor.

The enzyme catalyses 7-carboxy-7-deazaguanine + NH4(+) + ATP = 7-cyano-7-deazaguanine + ADP + phosphate + H2O + H(+). Its pathway is purine metabolism; 7-cyano-7-deazaguanine biosynthesis. Functionally, catalyzes the ATP-dependent conversion of 7-carboxy-7-deazaguanine (CDG) to 7-cyano-7-deazaguanine (preQ(0)). This Picrophilus torridus (strain ATCC 700027 / DSM 9790 / JCM 10055 / NBRC 100828 / KAW 2/3) protein is 7-cyano-7-deazaguanine synthase.